A 38-amino-acid polypeptide reads, in one-letter code: Large ribosomal subunit protein bL36 (38 aa).

This sequence belongs to the bacterial ribosomal protein bL36 family.

This is Large ribosomal subunit protein bL36 from Chlorobium limicola (strain DSM 245 / NBRC 103803 / 6330).